Here is a 261-residue protein sequence, read N- to C-terminus: Segregation and condensation protein A (261 aa).

Belongs to the ScpA family. As to quaternary structure, component of a cohesin-like complex composed of ScpA, ScpB and the Smc homodimer, in which ScpA and ScpB bind to the head domain of Smc. The presence of the three proteins is required for the association of the complex with DNA.

It localises to the cytoplasm. Functionally, participates in chromosomal partition during cell division. May act via the formation of a condensin-like complex containing Smc and ScpB that pull DNA away from mid-cell into both cell halves. The polypeptide is Segregation and condensation protein A (Desulfitobacterium hafniense (strain DSM 10664 / DCB-2)).